We begin with the raw amino-acid sequence, 81 residues long: Cytotoxin 3a (81 aa).

The signal sequence occupies residues Met1–Thr21. 4 disulfides stabilise this stretch: Cys24–Cys42, Cys35–Cys59, Cys63–Cys74, and Cys75–Cys80.

Belongs to the three-finger toxin family. Short-chain subfamily. Type IA cytotoxin sub-subfamily. As to quaternary structure, monomer in solution; Homodimer and oligomer in the presence of negatively charged lipids forming a pore with a size ranging between 20 and 30 Angstroms. Expressed by the venom gland.

The protein localises to the secreted. It is found in the target cell membrane. Shows cytolytic activity on many different cells by forming pore in lipid membranes. In vivo, increases heart rate or kills the animal by cardiac arrest. In addition, it binds to heparin with high affinity, interacts with Kv channel-interacting protein 1 (KCNIP1) in a calcium-independent manner, and binds to integrin alpha-V/beta-3 (ITGAV/ITGB3) with moderate affinity. This Naja atra (Chinese cobra) protein is Cytotoxin 3a.